Here is a 432-residue protein sequence, read N- to C-terminus: Enolase (432 aa).

A (2R)-2-phosphoglycerate-binding site is contributed by Q163. Catalysis depends on E205, which acts as the Proton donor. Residues D242, E285, and D312 each contribute to the Mg(2+) site. (2R)-2-phosphoglycerate is bound by residues K337, R366, S367, and K388. The active-site Proton acceptor is the K337.

It belongs to the enolase family. The cofactor is Mg(2+).

It is found in the cytoplasm. The protein localises to the secreted. It localises to the cell surface. It carries out the reaction (2R)-2-phosphoglycerate = phosphoenolpyruvate + H2O. The protein operates within carbohydrate degradation; glycolysis; pyruvate from D-glyceraldehyde 3-phosphate: step 4/5. Functionally, catalyzes the reversible conversion of 2-phosphoglycerate (2-PG) into phosphoenolpyruvate (PEP). It is essential for the degradation of carbohydrates via glycolysis. The protein is Enolase of Desulfovibrio desulfuricans (strain ATCC 27774 / DSM 6949 / MB).